The sequence spans 216 residues: Ras-related protein Rab-11A (216 aa).

Gly2 bears the N-acetylglycine mark. Positions 20, 21, 22, 23, 24, 25, 26, 37, 38, 40, 42, and 43 each coordinate GTP. Ser25 is a binding site for Mg(2+). The Switch 1 signature appears at 36–47 (FNLESKSTIGVE). 2 residues coordinate Mg(2+): Thr43 and Asp66. Positions 67-86 (TAGQERYRAITSAYYRGAVG) match the Switch 2 motif. Positions 69, 124, 125, 127, 155, and 156 each coordinate GTP. The tract at residues 183 to 208 (DRRENDMSPSNNVVPIHVPPTTENKP) is disordered. Residues Cys212 and Cys213 are each lipidated (S-geranylgeranyl cysteine). Cys213 is subject to Cysteine methyl ester. The propeptide at 214–216 (QNI) is removed in mature form.

Belongs to the small GTPase superfamily. Rab family. It depends on Mg(2+) as a cofactor.

It is found in the cell membrane. The protein resides in the endosome membrane. It localises to the recycling endosome membrane. The protein localises to the cleavage furrow. Its subcellular location is the cytoplasmic vesicle. It is found in the phagosome. The protein resides in the cytoplasmic vesicle membrane. It localises to the golgi apparatus. The protein localises to the trans-Golgi network. The catalysed reaction is GTP + H2O = GDP + phosphate + H(+). Its activity is regulated as follows. Regulated by guanine nucleotide exchange factors (GEFs) which promote the exchange of bound GDP for free GTP. Regulated by GTPase activating proteins (GAPs) which increase the GTP hydrolysis activity. Inhibited by GDP dissociation inhibitors (GDIs) which prevent Rab-GDP dissociation. Functionally, the small GTPases Rab are key regulators of intracellular membrane trafficking, from the formation of transport vesicles to their fusion with membranes. Rabs cycle between an inactive GDP-bound form and an active GTP-bound form that is able to recruit to membranes different set of downstream effectors directly responsible for vesicle formation, movement, tethering and fusion. The small Rab GTPase RAB11A regulates endocytic recycling. May also be involved in the regulation of preciliary trafficking and neosynthesized protein export. This Gallus gallus (Chicken) protein is Ras-related protein Rab-11A (RAB11A).